The following is a 416-amino-acid chain: Floricaula/leafy homolog 2 (416 aa).

The disordered stretch occupies residues 154–237; sequence EGLSEEPVQQ…DASGGISERQ (84 aa). Acidic residues predominate over residues 210 to 225; the sequence is AEEDEETEEGQEDDWN. 3 consecutive DNA-binding regions follow at residues 238–242, 307–314, and 378–381; these read REHPF, NKPKMRHY, and YVPT.

The protein belongs to the FLO/LFY family. As to expression, expressed in floral meristems and in indeterminate vegetative meristems.

Its subcellular location is the nucleus. Functionally, probable transcription factor that act to specify determinacy in the progenitor cells for both flowers and leaves. This Nicotiana tabacum (Common tobacco) protein is Floricaula/leafy homolog 2 (FL2).